The chain runs to 4080 residues: Hybrid PKS-NRPS synthetase poxE (4080 aa).

Residues 8–442 enclose the Ketosynthase family 3 (KS3) domain; it reads REPIAIVGSG…GTNAHAIIEA (435 aa). Active-site for beta-ketoacyl synthase activity residues include Cys181, His320, and His362. The segment at 554–878 is malonyl-CoA:ACP transacylase (MAT) domain; it reads VFTGQGAQWA…QRGMNDVEAM (325 aa). Residues 944–1078 form an N-terminal hotdog fold region; the sequence is HPILGTRCPD…GRLVITYGPV (135 aa). One can recognise a PKS/mFAS DH domain in the interval 944 to 1246; it reads HPILGTRCPD…AVPLEATNAD (303 aa). A dehydratase (DH) domain region spans residues 945 to 1243; sequence PILGTRCPDG…GIHAVPLEAT (299 aa). His976 serves as the catalytic Proton acceptor; for dehydratase activity. The interval 1093–1246 is C-terminal hotdog fold; that stretch reads MVDVPSERFY…AVPLEATNAD (154 aa). Asp1152 functions as the Proton donor; for dehydratase activity in the catalytic mechanism. Residues 1400-1585 are methyltransferase (MT) domain; that stretch reads HFSDYLASVV…GVDTFTSDAD (186 aa). The interval 2118 to 2292 is ketoreductase (KR)domain; the sequence is TYWLVGLTGS…AGSVMNIGAI (175 aa). The interval 2399 to 2478 is peptidyl carrier protein; the sequence is TTDEIYEVIK…TIGEIIKFVL (80 aa). In terms of domain architecture, Carrier 1 spans 2405–2481; sequence EVIKECFIVK…EIIKFVLEKL (77 aa). Ser2441 bears the O-(pantetheine 4'-phosphoryl)serine mark. Residues 2488-2569 are disordered; it reads SLGLSPPTGA…AASPSIHTEE (82 aa). Over residues 2511-2525 the composition is skewed to basic and acidic residues; sequence VVVERRNVPRLEKKI. The segment covering 2528–2545 has biased composition (low complexity); sequence SAGSRTSSSVTGTSKSVS. The span at 2551–2565 shows a compositional bias: polar residues; it reads DTASSQTSEAASPSI. Residues 2607-3036 form a condensation region; it reads KEPLSFGQSR…DSKQPGGHVS (430 aa). Residues 3069-3478 are adenylation; it reads DMAKQYPQKL…DGRLRIEGRI (410 aa). In terms of domain architecture, Carrier 2 spans 3593 to 3673; it reads AHLNEAQAQM…KMALLIKPQE (81 aa). The tract at residues 3598–3670 is thiolation; sequence AQAQMVQLWE…TLEKMALLIK (73 aa). Residue Ser3633 is modified to O-(pantetheine 4'-phosphoryl)serine. The segment at 3740–3959 is reductase (RED) domain; the sequence is LTGATGFIGQ…DFVPVEQVVR (220 aa).

The protein in the C-terminal section; belongs to the NRP synthetase family.

The protein operates within secondary metabolite biosynthesis. Its function is as follows. Hybrid PKS-NRPS synthetase; part of the gene cluster that mediates the biosynthesis of oxaleimides, cytotoxic compounds containing an unusual disubstituted succinimide moiety. The first step of the pathway is provided by the HR-PKS poxF that serves in a new mode of collaborative biosynthesis with the PKS-NRPS poxE, by providing the olefin containing amino acid substrate via the synthesis of an ACP-bound dec-4-enoate. The cytochrome P450 monooxygenase poxM-catalyzed oxidation at the alpha-position creates the enzyme-bound 2-hydroxydec-4-enoyl-ACP thioester, which may be prone to spontaneous hydrolysis to yield 2-hydroxydec-4-enoic acid due to increased electrophilicity of the carbonyl. 2-hydroxydec-4-enoic acid can then be further oxidized by poxM to yield the alpha-ketoacid 2-oxodec-4-enoicacid, which is reductively aminated by the aminotransferase poxL to yield (S,E)-2-aminodec-4-enoic acid. The Hybrid PKS-NRPS synthetase poxE then performs condensation between the octaketide product of its PKS modules and the amino group of (S,E)-2-aminodec-4-enoic acid which is activated and incorporated by the adenylation domain. The resulting aminoacyl product can be cyclized by the Diels-Alderase PoxQ and reductively released by the reductive (R) domain of poxE to yield an aldehyde intermediate. The released aldehyde is then substrate for a Knoevenagel condensation by the hydrolyase poxO followed by an oxidation at the 5-position of the pyrrolidone ring. The presence of the olefin from the amino acid building block allows for migration of the substituted allyl group to occur. This allylic transposition reaction takes place in a conjugate addition, semipinacol-like fashion to yield a succinimide intermediate. Iterative two-electron oxidations of the C7 methyl of the succinimide intermediate to the carboxylic acid can be catalyzed by one of two remaining cytochrome P450 monooxygenasess poxC or poxD to yield oxaleimide A. Subsequent oxidation yields the maleimide scaffold oxaleimide I. Both oxaleimide A and oxaleimide I can undergo oxidative modifications in the decalin ring to yield the series of products oxaleimides B to H. This chain is Hybrid PKS-NRPS synthetase poxE, found in Penicillium oxalicum.